The chain runs to 975 residues: Aminopeptidase N (975 aa).

Over 1–11 (MAKGFYISKAL) the chain is Cytoplasmic. Residues 12–32 (GILAIVLGIAAVSTIIALSVV) traverse the membrane as a helical; Signal-anchor for type II membrane protein segment. Residues 33 to 74 (YAQEKNKNAESSPVSSPVSSPVSSPVSPTNPSTTAATTLAQS) form a cytosolic Ser/Thr-rich junction region. Residues 33 to 975 (YAQEKNKNAE…VLQWFRENSQ (943 aa)) lie on the Extracellular side of the membrane. The tract at residues 41–68 (AESSPVSSPVSSPVSSPVSPTNPSTTAA) is disordered. Residues 43 to 59 (SSPVSSPVSSPVSSPVS) are compositionally biased toward low complexity. Residues 75–975 (KPWNHYRLPK…VLQWFRENSQ (901 aa)) are metalloprotease. N134 is a glycosylation site (N-linked (GlcNAc...) asparagine). Position 182 is a sulfotyrosine (Y182). 2 N-linked (GlcNAc...) asparagine glycosylation sites follow: N240 and N271. 358 to 362 (GAMEN) is a substrate binding site. H394 contacts Zn(2+). E395 (proton acceptor) is an active-site residue. 2 residues coordinate Zn(2+): H398 and E417. Y425 and Y430 each carry sulfotyrosine. N533, N580, N633, N689, and N747 each carry an N-linked (GlcNAc...) asparagine glycan. Intrachain disulfides connect C769/C776 and C806/C842. N-linked (GlcNAc...) asparagine glycosylation occurs at N826.

The protein belongs to the peptidase M1 family. In terms of assembly, (Microbial infection) Interacts with CCoV spike glycoprotein. Homodimer. Interacts with SLC6A19. It depends on Zn(2+) as a cofactor. Sulfated. In terms of processing, N- and O-glycosylated. Post-translationally, may undergo proteolysis and give rise to a soluble form.

The protein resides in the cell membrane. It catalyses the reaction Release of an N-terminal amino acid, Xaa-|-Yaa- from a peptide, amide or arylamide. Xaa is preferably Ala, but may be most amino acids including Pro (slow action). When a terminal hydrophobic residue is followed by a prolyl residue, the two may be released as an intact Xaa-Pro dipeptide.. Its function is as follows. Broad specificity aminopeptidase which plays a role in the final digestion of peptides generated from hydrolysis of proteins by gastric and pancreatic proteases. Also involved in the processing of various peptides including peptide hormones, such as angiotensin III and IV, neuropeptides, and chemokines. May also be involved the cleavage of peptides bound to major histocompatibility complex class II molecules of antigen presenting cells. May have a role in angiogenesis and promote cholesterol crystallization. May have a role in amino acid transport by acting as binding partner of amino acid transporter SLC6A19 and regulating its activity. (Microbial infection) Probable receptor for canine coronavirus (CCoV). In Canis lupus familiaris (Dog), this protein is Aminopeptidase N (ANPEP).